A 59-amino-acid chain; its full sequence is Large ribosomal subunit protein bL32 (59 aa).

The interval 1 to 28 (MAVQQNKKSPSKRGMHRAHDFLTDPPLA) is disordered.

The protein belongs to the bacterial ribosomal protein bL32 family.

This is Large ribosomal subunit protein bL32 from Aromatoleum aromaticum (strain DSM 19018 / LMG 30748 / EbN1) (Azoarcus sp. (strain EbN1)).